The chain runs to 752 residues: Probable beta-glucosidase D (752 aa).

A signal peptide spans 1–18; it reads MRFVSLAVGAALLGAAGA. N-linked (GlcNAc...) asparagine glycans are attached at residues Asn187 and Asn237. Asp265 is an active-site residue. N-linked (GlcNAc...) asparagine glycosylation is found at Asn299, Asn343, Asn441, Asn510, Asn532, Asn571, Asn586, Asn638, Asn661, and Asn743.

Belongs to the glycosyl hydrolase 3 family.

Its subcellular location is the secreted. It carries out the reaction Hydrolysis of terminal, non-reducing beta-D-glucosyl residues with release of beta-D-glucose.. Its pathway is glycan metabolism; cellulose degradation. Functionally, beta-glucosidases are one of a number of cellulolytic enzymes involved in the degradation of cellulosic biomass. Catalyzes the last step releasing glucose from the inhibitory cellobiose. The sequence is that of Probable beta-glucosidase D (bglD) from Aspergillus oryzae (strain ATCC 42149 / RIB 40) (Yellow koji mold).